Here is a 304-residue protein sequence, read N- to C-terminus: Thiosulfate sulfurtransferase TUM1 (304 aa).

Rhodanese domains are found at residues 20-137 and 177-299; these read KVHR…PLDS and LAKK…PEWI. Positions 191-201 are enriched in basic and acidic residues; the sequence is RFEGTEPEPRS. The interval 191-222 is disordered; it reads RFEGTEPEPRSDIPSGHIPGTQPLPYGSLLDP. Ser-201 bears the Phosphoserine mark. Cys-259 functions as the Cysteine persulfide intermediate in the catalytic mechanism. Ser-264 carries the post-translational modification Phosphoserine.

The protein resides in the mitochondrion. Its subcellular location is the cytoplasm. The enzyme catalyses thiosulfate + hydrogen cyanide = thiocyanate + sulfite + 2 H(+). Functionally, sulfur transferase that accepts persulfite from NFS1 and transfers it to UBA4 in the pathway for 2-thiolation of the wobble uridine base of tRNAs. Stimulates sulfur transfer by NFS1. Involved in metabolism of sterol esters in a tRNA thiolation pathway-independent manner. The chain is Thiosulfate sulfurtransferase TUM1 from Saccharomyces cerevisiae (strain ATCC 204508 / S288c) (Baker's yeast).